A 129-amino-acid chain; its full sequence is D-ribose pyranase (129 aa).

The Proton donor role is filled by H20. Substrate-binding positions include D28, H96, and Y118–N120.

The protein belongs to the RbsD / FucU family. RbsD subfamily. As to quaternary structure, homodecamer.

It localises to the cytoplasm. The catalysed reaction is beta-D-ribopyranose = beta-D-ribofuranose. It participates in carbohydrate metabolism; D-ribose degradation; D-ribose 5-phosphate from beta-D-ribopyranose: step 1/2. Its function is as follows. Catalyzes the interconversion of beta-pyran and beta-furan forms of D-ribose. In Shouchella clausii (strain KSM-K16) (Alkalihalobacillus clausii), this protein is D-ribose pyranase.